Here is a 374-residue protein sequence, read N- to C-terminus: Probable plastid-lipid-associated protein 3, chloroplastic (374 aa).

The transit peptide at 1 to 46 (MAMPPPLFAAASHASLLLPSPTIHSSTGSRRPFRLPLRSSRRPPVA) directs the protein to the chloroplast. Positions 19 to 148 (PSPTIHSSTG…EDNEEERREE (130 aa)) are disordered. Residues 28–54 (GSRRPFRLPLRSSRRPPVAAAAASGVP) are compositionally biased toward low complexity. 2 stretches are compositionally biased toward pro residues: residues 64–73 (APEPPSQPDP) and 127–136 (PAPPPPPPPV).

It belongs to the PAP/fibrillin family.

Its subcellular location is the plastid. The protein localises to the chloroplast. The chain is Probable plastid-lipid-associated protein 3, chloroplastic (PAP3) from Oryza sativa subsp. japonica (Rice).